Consider the following 673-residue polypeptide: Bifunctional lycopene cyclase/phytoene synthase (673 aa).

Residues 1-251 (MTALAYYQIH…IVLGLSACDH (251 aa)) are lycopene beta-cyclase. 7 helical membrane passes run 9-29 (IHLI…SPIL), 36-56 (KISI…SWII), 81-101 (YEEY…YVLA), 117-137 (SALS…LFTA), 157-177 (LSLL…EYAF), 187-207 (TIAA…VAVG), and 226-246 (VLPI…VLGL). The phytoene synthase stretch occupies residues 258–673 (LHGRTIYGNK…SVVMSGWEGQ (416 aa)). The tract at residues 376–399 (KILSSPLLPPSHPSRPTGMYPLPP) is disordered.

The protein in the N-terminal section; belongs to the lycopene beta-cyclase family. This sequence in the C-terminal section; belongs to the phytoene/squalene synthase family.

Its subcellular location is the membrane. It catalyses the reaction all-trans-lycopene = gamma-carotene. It carries out the reaction gamma-carotene = all-trans-beta-carotene. The enzyme catalyses 2 (2E,6E,10E)-geranylgeranyl diphosphate = 15-cis-phytoene + 2 diphosphate. It functions in the pathway carotenoid biosynthesis; beta-carotene biosynthesis. It participates in carotenoid biosynthesis; phytoene biosynthesis; all-trans-phytoene from geranylgeranyl diphosphate: step 1/1. Bifunctional enzyme that catalyzes the reactions from geranylgeranyl diphosphate to phytoene (phytoene synthase) and lycopene to beta-carotene via the intermediate gamma-carotene (lycopene cyclase). The cyclase preferentially catalyzes the symmetric cyclization of both ends of the substrate to produce dicyclic carotenoids. Beta-carotene is further processed to the acidic carotenoid astaxanthin. This chain is Bifunctional lycopene cyclase/phytoene synthase, found in Phaffia rhodozyma (Yeast).